The sequence spans 682 residues: DNA ligase (682 aa).

Residues 42 to 46, 91 to 92, and Glu124 contribute to the NAD(+) site; these read DAEYD and SL. Lys126 functions as the N6-AMP-lysine intermediate in the catalytic mechanism. Residues Arg147, Glu184, Lys302, and Lys326 each contribute to the NAD(+) site. Positions 420, 423, 438, and 444 each coordinate Zn(2+). Residues 603–682 enclose the BRCT domain; sequence IADNPLKGKS…QEFIALTGEN (80 aa).

This sequence belongs to the NAD-dependent DNA ligase family. LigA subfamily. The cofactor is Mg(2+). Mn(2+) is required as a cofactor.

It carries out the reaction NAD(+) + (deoxyribonucleotide)n-3'-hydroxyl + 5'-phospho-(deoxyribonucleotide)m = (deoxyribonucleotide)n+m + AMP + beta-nicotinamide D-nucleotide.. Functionally, DNA ligase that catalyzes the formation of phosphodiester linkages between 5'-phosphoryl and 3'-hydroxyl groups in double-stranded DNA using NAD as a coenzyme and as the energy source for the reaction. It is essential for DNA replication and repair of damaged DNA. The polypeptide is DNA ligase (Actinobacillus pleuropneumoniae serotype 7 (strain AP76)).